A 490-amino-acid polypeptide reads, in one-letter code: Aspartyl/glutamyl-tRNA(Asn/Gln) amidotransferase subunit B (490 aa).

It belongs to the GatB/GatE family. GatB subfamily. Heterotrimer of A, B and C subunits.

It carries out the reaction L-glutamyl-tRNA(Gln) + L-glutamine + ATP + H2O = L-glutaminyl-tRNA(Gln) + L-glutamate + ADP + phosphate + H(+). The enzyme catalyses L-aspartyl-tRNA(Asn) + L-glutamine + ATP + H2O = L-asparaginyl-tRNA(Asn) + L-glutamate + ADP + phosphate + 2 H(+). Allows the formation of correctly charged Asn-tRNA(Asn) or Gln-tRNA(Gln) through the transamidation of misacylated Asp-tRNA(Asn) or Glu-tRNA(Gln) in organisms which lack either or both of asparaginyl-tRNA or glutaminyl-tRNA synthetases. The reaction takes place in the presence of glutamine and ATP through an activated phospho-Asp-tRNA(Asn) or phospho-Glu-tRNA(Gln). The chain is Aspartyl/glutamyl-tRNA(Asn/Gln) amidotransferase subunit B from Burkholderia pseudomallei (strain K96243).